Here is a 350-residue protein sequence, read N- to C-terminus: Protein-arginine kinase (350 aa).

The Phosphagen kinase C-terminal domain maps to 21-253 (IVISSRIRLA…VRLADQEREA (233 aa)). Residues 24-28 (SSRIR), His-90, Arg-124, 175-179 (RASTM), and 206-211 (RGLYGE) contribute to the ATP site. The RDXXRA motif of the pArg binding pocket involved in allosteric regulation motif lies at 336-341 (RDVHRA).

It belongs to the ATP:guanido phosphotransferase family.

It catalyses the reaction L-arginyl-[protein] + ATP = N(omega)-phospho-L-arginyl-[protein] + ADP + H(+). Appears to be allosterically activated by the binding of pArg-containing polypeptides to the pArg-binding pocket localized in the C-terminal domain of McsB. Its function is as follows. Catalyzes the specific phosphorylation of arginine residues in proteins. The polypeptide is Protein-arginine kinase (Moorella thermoacetica (strain ATCC 39073 / JCM 9320)).